A 566-amino-acid chain; its full sequence is Acyl-CoA synthetase ALT10 (566 aa).

196-207 (MLFTSGTTGAPK) contacts AMP. The interval 473–551 (EVEHAALSHE…DAVHYNRTGK (79 aa)) is AMP-binding.

Belongs to the ATP-dependent AMP-binding enzyme family.

The protein operates within mycotoxin biosynthesis. Functionally, acyl-CoA synthetase; part of the gene cluster that mediates the biosynthesis of the host-selective toxins (HSTs) AAL-toxins, sphinganine-analog mycotoxins responsible for Alternaria stem canker on tomato by the tomato pathotype. The biosynthesis starts with the polyketide synthase ALT1-catalyzed C-16 carbon chain assembly from one starter acetyl-CoA unit with malonyl-CoA extender units. ALT1 also selectively transfers methyl groups at the first and the third cycle of chain elongation for AAL toxin. The C-16 polyketide chain is released from the enzyme by a nucleophilic attack of a carbanion, which is derived from R-carbon of glycin by decarboxylation, on the carbonyl carbon of polyketide acyl chain. This step is probably catalyzed by a pyridoxal 5'-phosphate-dependent aminoacyl transferase ALT4. The respective functions of the other enzymes encoded by the cluster have still to be elucidated. The sphingosine N-acyltransferase-like protein ALT7 seems not to act as a resistance/self-tolerance factor against the toxin in the toxin biosynthetic gene cluster, contrary to what is expected. The protein is Acyl-CoA synthetase ALT10 of Alternaria alternata (Alternaria rot fungus).